A 180-amino-acid chain; its full sequence is Endoribonuclease YbeY (180 aa).

The Zn(2+) site is built by His149, His153, and His159.

The protein belongs to the endoribonuclease YbeY family. The cofactor is Zn(2+).

The protein localises to the cytoplasm. In terms of biological role, single strand-specific metallo-endoribonuclease involved in late-stage 70S ribosome quality control and in maturation of the 3' terminus of the 16S rRNA. The protein is Endoribonuclease YbeY of Prochlorococcus marinus subsp. pastoris (strain CCMP1986 / NIES-2087 / MED4).